Here is a 251-residue protein sequence, read N- to C-terminus: Imidazole glycerol phosphate synthase subunit HisF (251 aa).

Active-site residues include D11 and D130.

Belongs to the HisA/HisF family. In terms of assembly, heterodimer of HisH and HisF.

It localises to the cytoplasm. It carries out the reaction 5-[(5-phospho-1-deoxy-D-ribulos-1-ylimino)methylamino]-1-(5-phospho-beta-D-ribosyl)imidazole-4-carboxamide + L-glutamine = D-erythro-1-(imidazol-4-yl)glycerol 3-phosphate + 5-amino-1-(5-phospho-beta-D-ribosyl)imidazole-4-carboxamide + L-glutamate + H(+). The protein operates within amino-acid biosynthesis; L-histidine biosynthesis; L-histidine from 5-phospho-alpha-D-ribose 1-diphosphate: step 5/9. Functionally, IGPS catalyzes the conversion of PRFAR and glutamine to IGP, AICAR and glutamate. The HisF subunit catalyzes the cyclization activity that produces IGP and AICAR from PRFAR using the ammonia provided by the HisH subunit. This is Imidazole glycerol phosphate synthase subunit HisF from Pelodictyon phaeoclathratiforme (strain DSM 5477 / BU-1).